The primary structure comprises 805 residues: Zinc finger X-chromosomal protein (805 aa).

Ser274 is subject to Phosphoserine. C2H2-type zinc fingers lie at residues Tyr425 to His447, Tyr456 to His478, Ile488 to His510, His519 to His542, His548 to His570, Tyr576 to His599, Phe605 to His627, His633 to His656, His662 to His684, His690 to His713, Phe719 to His741, Tyr747 to His770, and His776 to His798.

Belongs to the krueppel C2H2-type zinc-finger protein family. ZFX/ZFY subfamily.

The protein resides in the nucleus. Functionally, probable transcriptional activator. This is Zinc finger X-chromosomal protein (ZFX) from Homo sapiens (Human).